A 772-amino-acid chain; its full sequence is Mitochondrial intermediate peptidase (772 aa).

A mitochondrion-targeting transit peptide spans 1–37 (MLRTIILKAGSNASIPSPSRQNKLLRFFATAGAVSRT). Histidine 558 serves as a coordination point for Zn(2+). Residue glutamate 559 is part of the active site. Histidine 562 and glutamate 587 together coordinate Zn(2+).

The protein belongs to the peptidase M3 family. Requires Zn(2+) as cofactor.

The protein localises to the mitochondrion matrix. The enzyme catalyses Release of an N-terminal octapeptide as second stage of processing of some proteins imported into the mitochondrion.. Stimulated by Fe(2+). Cleaves proteins, imported into the mitochondrion, to their mature size. While most mitochondrial precursor proteins are processed to the mature form in one step by mitochondrial processing peptidase (MPP), the sequential cleavage by MIP of an octapeptide after initial processing by MPP is a required step for a subgroup of nuclear-encoded precursor proteins destined for the matrix or the inner membrane. Cleaves precursor proteins of respiratory components, including subunits of the electron transport chain and tricarboxylic acid cycle enzymes, and components of the mitochondrial genetic machinery, including ribosomal proteins, translation factors, and proteins required for mitochondrial DNA metabolism. The protein is Mitochondrial intermediate peptidase (OCT1) of Saccharomyces cerevisiae (strain ATCC 204508 / S288c) (Baker's yeast).